The sequence spans 341 residues: MRTGDFDYELSEEKIAKYPPAERGSTRLLVLNRHSGAVVHASYASLDLFLQPGDLLVLNNTRVLRARLYASKSTGARIELMLLEKHQEEQNRVLYRGKLKKGDKLMAHDQELLVTDIVDHGIARIAVCGERSLSDLFERFGGVPIPPYLKRDAEEVDRERYQTVFAELPGSVAAPTASLNMTSELLDTLRRKGVDMVTLTLHVGLGTFLPVRADALEEHVMHREYYSIPATLVEKIRKVKTTGGRVIAVGTTVTRALEHAGERMETFTGDAPLTGEADIFIYPGYQFRIIDCLLTNFHAPRSTVLMLTAAFAGPDHLRNAYQKALEEGYRFLSYGDSMFIA.

This sequence belongs to the QueA family. As to quaternary structure, monomer.

The protein localises to the cytoplasm. It catalyses the reaction 7-aminomethyl-7-carbaguanosine(34) in tRNA + S-adenosyl-L-methionine = epoxyqueuosine(34) in tRNA + adenine + L-methionine + 2 H(+). It functions in the pathway tRNA modification; tRNA-queuosine biosynthesis. In terms of biological role, transfers and isomerizes the ribose moiety from AdoMet to the 7-aminomethyl group of 7-deazaguanine (preQ1-tRNA) to give epoxyqueuosine (oQ-tRNA). This is S-adenosylmethionine:tRNA ribosyltransferase-isomerase from Pelodictyon phaeoclathratiforme (strain DSM 5477 / BU-1).